Consider the following 385-residue polypeptide: Cytochrome b (385 aa).

Topologically, residues 1-27 (MRLLKSHPLLKLVNSYLIDASQPSNIS) are mitochondrial matrix. Tyr16 provides a ligand contact to a ubiquinone. The helical transmembrane segment at 28-51 (YLWNFGSLLACCLIIQIVTGVTLA) threads the bilayer. Over 52–74 (MHYSPNVLEAFNSIEHIMRDVNN) the chain is Mitochondrial intermembrane. The helical transmembrane segment at 75–102 (GWLVRYLHSNTASAFFFLVYLHIGRGMY) threads the bilayer. Heme b-binding residues include His82 and His96. Topologically, residues 103–110 (YGSYRAPR) are mitochondrial matrix. Residues 111 to 135 (TLVWAIGTVILILMMATAFLGYVLP) traverse the membrane as a helical segment. At 136 to 172 (YGQMSLWGATVITNLISAIPWIGQDIVEFIWGGFSVN) the chain is on the mitochondrial intermembrane side. Residues 173-205 (NATLNRFFALHFVLPFILAALVLMHLIALHDTA) form a helical membrane-spanning segment. Heme b-binding residues include His183 and His197. A ubiquinone is bound at residue His202. Residues 206–224 (GSSNPLGVSGNYDRITFAP) are Mitochondrial matrix-facing. The helical transmembrane segment at 225 to 247 (YYLFKDLITIFIFIYVLSSFVFF) threads the bilayer. Topologically, residues 248 to 288 (MPNVLGDSENYIMANPMQTPPAIVPEWYLLPFYAILRSIPN) are mitochondrial intermembrane. Residues 289–309 (KLLGVIAMFSAILAIMLLPIT) form a helical membrane-spanning segment. Residues 310-320 (DLGRSKGLQFR) are Mitochondrial matrix-facing. Residues 321–341 (PLSKFAFWAFVVNFLILMKLG) traverse the membrane as a helical segment. The Mitochondrial intermembrane segment spans residues 342–348 (ACHVESP). Residues 349–365 (FIELGQFSTIFYFSYFI) form a helical membrane-spanning segment. The Mitochondrial matrix portion of the chain corresponds to 366–385 (FIVPVLSLIENTLVDLNYLK).

Belongs to the cytochrome b family. Component of the ubiquinol-cytochrome c oxidoreductase (cytochrome b-c1 complex, complex III, CIII), a multisubunit enzyme composed of 10 subunits. The complex is composed of 3 respiratory subunits cytochrome b (cob), cytochrome c1 (cyt-1) and Rieske protein (fes-1), 2 core protein subunits pep and ucr-1, and 5 low-molecular weight protein subunits qcr6, qcr7, qcr8, qcr9 and probably NCU16844/qcr10. The complex exists as an obligatory dimer and forms supercomplexes (SCs) in the inner mitochondrial membrane with NADH-ubiquinone oxidoreductase (complex I, CI) and cytochrome c oxidase (complex IV, CIV), resulting in different assemblies (supercomplexes SCI(1)III(2), SCIII(2)IV(1) and SCIII(2)IV(2) as well as higher order I(x)III(y)IV(z) megacomplexes). The cofactor is heme b.

It is found in the mitochondrion inner membrane. The catalysed reaction is a quinol + 2 Fe(III)-[cytochrome c](out) = a quinone + 2 Fe(II)-[cytochrome c](out) + 2 H(+)(out). Component of the ubiquinol-cytochrome c oxidoreductase, a multisubunit transmembrane complex that is part of the mitochondrial electron transport chain which drives oxidative phosphorylation. The respiratory chain contains 3 multisubunit complexes succinate dehydrogenase (complex II, CII), ubiquinol-cytochrome c oxidoreductase (cytochrome b-c1 complex, complex III, CIII) and cytochrome c oxidase (complex IV, CIV), that cooperate to transfer electrons derived from NADH and succinate to molecular oxygen, creating an electrochemical gradient over the inner membrane that drives transmembrane transport and the ATP synthase. The cytochrome b-c1 complex catalyzes electron transfer from ubiquinol to cytochrome c, linking this redox reaction to translocation of protons across the mitochondrial inner membrane, with protons being carried across the membrane as hydrogens on the quinol. In the process called Q cycle, 2 protons are consumed from the matrix, 4 protons are released into the intermembrane space and 2 electrons are passed to cytochrome c. Cytochrome b is a catalytic core subunit containing 2 b-type hemes BL and BH topographically segregated in the quinone reduction (Qi) and quinol oxidation (Q0) sites on opposite sides of the membrane. This is Cytochrome b (cob) from Neurospora crassa (strain ATCC 24698 / 74-OR23-1A / CBS 708.71 / DSM 1257 / FGSC 987).